The sequence spans 247 residues: Adenosylcobinamide-GDP ribazoletransferase (247 aa).

A run of 6 helical transmembrane segments spans residues 34-54, 59-79, 113-133, 138-158, 171-193, and 194-214; these read IVTF…VFVA, CGIP…TGGF, GGLA…ELAL, MLAA…LLMY, VFIG…ILAA, and ILMP…AIFI.

It belongs to the CobS family. Mg(2+) is required as a cofactor.

Its subcellular location is the cell inner membrane. It carries out the reaction alpha-ribazole + adenosylcob(III)inamide-GDP = adenosylcob(III)alamin + GMP + H(+). It catalyses the reaction alpha-ribazole 5'-phosphate + adenosylcob(III)inamide-GDP = adenosylcob(III)alamin 5'-phosphate + GMP + H(+). It functions in the pathway cofactor biosynthesis; adenosylcobalamin biosynthesis; adenosylcobalamin from cob(II)yrinate a,c-diamide: step 7/7. Its function is as follows. Joins adenosylcobinamide-GDP and alpha-ribazole to generate adenosylcobalamin (Ado-cobalamin). Also synthesizes adenosylcobalamin 5'-phosphate from adenosylcobinamide-GDP and alpha-ribazole 5'-phosphate. In Citrobacter koseri (strain ATCC BAA-895 / CDC 4225-83 / SGSC4696), this protein is Adenosylcobinamide-GDP ribazoletransferase.